The sequence spans 202 residues: Na(+)-translocating NADH-quinone reductase subunit E (202 aa).

6 helical membrane passes run 11-31 (SVFIENMALSFFLGMCTFIAV), 35-55 (IETAVGLGIAVVIVQTLTVPA), 81-101 (FIALMACIGVIAAMVQILEMV), 114-134 (GIFLPLITVNCAILAGSLFMI), 144-164 (VVYGVGSGFGWALAITAMAGV), and 180-200 (LGITFISAGLMALGFMAFSGI).

This sequence belongs to the NqrDE/RnfAE family. In terms of assembly, composed of six subunits; NqrA, NqrB, NqrC, NqrD, NqrE and NqrF.

The protein resides in the cell inner membrane. It carries out the reaction a ubiquinone + n Na(+)(in) + NADH + H(+) = a ubiquinol + n Na(+)(out) + NAD(+). Functionally, NQR complex catalyzes the reduction of ubiquinone-1 to ubiquinol by two successive reactions, coupled with the transport of Na(+) ions from the cytoplasm to the periplasm. NqrA to NqrE are probably involved in the second step, the conversion of ubisemiquinone to ubiquinol. This chain is Na(+)-translocating NADH-quinone reductase subunit E, found in Methylococcus capsulatus (strain ATCC 33009 / NCIMB 11132 / Bath).